We begin with the raw amino-acid sequence, 349 residues long: GSYADELVKTAKTIASPGRGILAMDESNATCGKRLDSIGLENTEANRQAWRTLLVTVPTLGEYISGAILFEETLYQSTVDGRKIVDVLVEQNIIPGIKVDKGLVPLAGSNNESWCQGLDGLASRSAAYYQQGARFAKWRTVVSIPNGPSALAVKEAAWGLARYAAISQDNGLVPIVEPEILLDGEHGIDRTFEVAQKVWAEVFYYLAENNVQFEGILLKPSMVTPGAESKDKASPTKVAEYTLNLLHRRIPPAVPGIMFLSGGQSEVEATLNLNAMNKSPNPWHVSFSYARALQNTALKTWGGLPENVKAAQEALLFRAKSNSLAQLGKYIGDGESEEAKKDCCQGYSY.

Substrate contacts are provided by R47 and K137. E177 acts as the Proton acceptor in catalysis. K219 serves as the catalytic Schiff-base intermediate with dihydroxyacetone-P.

This sequence belongs to the class I fructose-bisphosphate aldolase family.

Its subcellular location is the plastid. It localises to the chloroplast. It catalyses the reaction beta-D-fructose 1,6-bisphosphate = D-glyceraldehyde 3-phosphate + dihydroxyacetone phosphate. The protein operates within carbohydrate degradation; glycolysis; D-glyceraldehyde 3-phosphate and glycerone phosphate from D-glucose: step 4/4. This chain is Fructose-bisphosphate aldolase 2, chloroplastic, found in Pisum sativum (Garden pea).